The following is a 197-amino-acid chain: Large ribosomal subunit protein eL15 (197 aa).

The tract at residues 175–197 is disordered; the sequence is LRTGRKGSSKSRPSIRANGRLRR.

This sequence belongs to the eukaryotic ribosomal protein eL15 family.

This is Large ribosomal subunit protein eL15 (rpl15e) from Thermoplasma volcanium (strain ATCC 51530 / DSM 4299 / JCM 9571 / NBRC 15438 / GSS1).